The sequence spans 60 residues: Large ribosomal subunit protein bL32 (60 aa).

Belongs to the bacterial ribosomal protein bL32 family.

This chain is Large ribosomal subunit protein bL32, found in Petrotoga mobilis (strain DSM 10674 / SJ95).